The chain runs to 545 residues: Thermosome subunit (545 aa).

This sequence belongs to the TCP-1 chaperonin family. As to quaternary structure, forms an oligomeric complex of eight-membered rings.

In terms of biological role, molecular chaperone; binds unfolded polypeptides in vitro, and has a weak ATPase activity. The sequence is that of Thermosome subunit (ths) from Desulfurococcus sp. (strain SY).